The following is a 304-amino-acid chain: tRNA pseudouridine synthase A (304 aa).

Residue aspartate 65 is the Nucleophile of the active site. A substrate-binding site is contributed by tyrosine 123. Residues 274–304 (HTGQEKPEARLGNGDLESREERPPHEMSPLH) are disordered. Residues 289-298 (LESREERPPH) are compositionally biased toward basic and acidic residues.

It belongs to the tRNA pseudouridine synthase TruA family. As to quaternary structure, homodimer.

It catalyses the reaction uridine(38/39/40) in tRNA = pseudouridine(38/39/40) in tRNA. Functionally, formation of pseudouridine at positions 38, 39 and 40 in the anticodon stem and loop of transfer RNAs. The polypeptide is tRNA pseudouridine synthase A (Gloeobacter violaceus (strain ATCC 29082 / PCC 7421)).